The chain runs to 457 residues: Arginine biosynthesis bifunctional protein ArgJ, mitochondrial (457 aa).

The substrate site is built by Thr-184, Lys-213, Thr-224, Glu-312, Asn-452, and Thr-457. Thr-224 (nucleophile) is an active-site residue.

Belongs to the ArgJ family. In terms of assembly, heterodimer of an alpha and a beta chain. Post-translationally, the alpha and beta chains are autoproteolytically processed from a single precursor protein within the mitochondrion.

The protein resides in the mitochondrion matrix. The catalysed reaction is N(2)-acetyl-L-ornithine + L-glutamate = N-acetyl-L-glutamate + L-ornithine. The enzyme catalyses L-glutamate + acetyl-CoA = N-acetyl-L-glutamate + CoA + H(+). It functions in the pathway amino-acid biosynthesis; L-arginine biosynthesis; L-ornithine and N-acetyl-L-glutamate from L-glutamate and N(2)-acetyl-L-ornithine (cyclic): step 1/1. It participates in amino-acid biosynthesis; L-arginine biosynthesis; N(2)-acetyl-L-ornithine from L-glutamate: step 1/4. Catalyzes two activities which are involved in the cyclic version of arginine biosynthesis: the synthesis of acetylglutamate from glutamate and acetyl-CoA, and of ornithine by transacetylation between acetylornithine and glutamate. The polypeptide is Arginine biosynthesis bifunctional protein ArgJ, mitochondrial (Aspergillus terreus (strain NIH 2624 / FGSC A1156)).